A 519-amino-acid polypeptide reads, in one-letter code: Probable pectinesterase/pectinesterase inhibitor 36 (519 aa).

The signal sequence occupies residues 1–25; the sequence is MSTFVKVTDLITIMFFLAIAAVITA. The pectinesterase inhibitor 36 stretch occupies residues 27–141; sequence NTAELDVLEM…TFVLHEALAF (115 aa). Asparagine 92 and asparagine 130 each carry an N-linked (GlcNAc...) asparagine glycan. The tract at residues 147–196 is disordered; the sequence is GHMKKRLHGPARQGHGPTRPKHRPTRPNHGPGRSHHGPSRPNQNGGMLVS. Basic residues predominate over residues 164–184; sequence TRPKHRPTRPNHGPGRSHHGP. Over residues 186–196 the composition is skewed to polar residues; sequence RPNQNGGMLVS. Positions 205-505 are pectinesterase 36; sequence DFVVARDGSA…FTVSRFIQGD (301 aa). Residues threonine 283 and glutamine 313 each contribute to the substrate site. Aspartate 336 serves as the catalytic Proton donor; for pectinesterase activity. Aspartate 357 acts as the Nucleophile; for pectinesterase activity in catalysis. Arginine 425 and tryptophan 427 together coordinate substrate.

It in the N-terminal section; belongs to the PMEI family. This sequence in the C-terminal section; belongs to the pectinesterase family. As to expression, expressed in siliques.

The protein resides in the secreted. The protein localises to the cell wall. It carries out the reaction [(1-&gt;4)-alpha-D-galacturonosyl methyl ester](n) + n H2O = [(1-&gt;4)-alpha-D-galacturonosyl](n) + n methanol + n H(+). It participates in glycan metabolism; pectin degradation; 2-dehydro-3-deoxy-D-gluconate from pectin: step 1/5. In terms of biological role, acts in the modification of cell walls via demethylesterification of cell wall pectin. In Arabidopsis thaliana (Mouse-ear cress), this protein is Probable pectinesterase/pectinesterase inhibitor 36 (PME36).